An 83-amino-acid chain; its full sequence is Small ribosomal subunit protein eS21 (83 aa).

Met1 bears the N-acetylmethionine mark. A Glycyl lysine isopeptide (Lys-Gly) (interchain with G-Cter in SUMO2) cross-link involves residue Lys41.

Belongs to the eukaryotic ribosomal protein eS21 family. As to quaternary structure, component of the 40S small ribosomal subunit.

The protein localises to the cytoplasm. Its subcellular location is the cytosol. It is found in the rough endoplasmic reticulum. Functionally, component of the small ribosomal subunit. The ribosome is a large ribonucleoprotein complex responsible for the synthesis of proteins in the cell. In Oryctolagus cuniculus (Rabbit), this protein is Small ribosomal subunit protein eS21 (RPS21).